A 1598-amino-acid polypeptide reads, in one-letter code: Serine/threonine-protein kinase Nek1 (1598 aa).

The 275-residue stretch at 106–380 folds into the Protein kinase domain; that stretch reads YEVIRQIGAG…ALQCLGYTIF (275 aa). Residues 112-120 and Lys135 contribute to the ATP site; that span reads IGAGRFGEV. The active-site Proton acceptor is Asp240.

This sequence belongs to the protein kinase superfamily. NEK Ser/Thr protein kinase family. NIMA subfamily.

Its subcellular location is the cytoplasm. The protein localises to the cytoskeleton. It is found in the microtubule organizing center. It localises to the centrosome. The protein resides in the spindle pole. It catalyses the reaction L-seryl-[protein] + ATP = O-phospho-L-seryl-[protein] + ADP + H(+). It carries out the reaction L-threonyl-[protein] + ATP = O-phospho-L-threonyl-[protein] + ADP + H(+). With respect to regulation, phosphorylation status of the T-loop (amino acids 267-293) modulates kinase activity and subcellular localization of the protein. Probable serine/threonine-protein kinase. Involved in controlling centrosome splitting. Promotes separation of the centrosome outer cores. This is Serine/threonine-protein kinase Nek1 from Toxoplasma gondii (strain ATCC 50611 / Me49).